The primary structure comprises 98 residues: NADH-ubiquinone oxidoreductase chain 4L (98 aa).

3 helical membrane passes run 1-21 (MTPI…GLAF), 26-46 (LLSA…ALSL), and 59-79 (APML…ALMV).

Belongs to the complex I subunit 4L family.

It is found in the mitochondrion membrane. It carries out the reaction a ubiquinone + NADH + 5 H(+)(in) = a ubiquinol + NAD(+) + 4 H(+)(out). Core subunit of the mitochondrial membrane respiratory chain NADH dehydrogenase (Complex I) which catalyzes electron transfer from NADH through the respiratory chain, using ubiquinone as an electron acceptor. Part of the enzyme membrane arm which is embedded in the lipid bilayer and involved in proton translocation. This chain is NADH-ubiquinone oxidoreductase chain 4L (MT-ND4L), found in Tetraodon nigroviridis (Spotted green pufferfish).